The chain runs to 204 residues: Lymphotoxin-alpha (204 aa).

The signal sequence occupies residues 1–33; it reads MTPPGRLYLRRVCSTPILLLLGLLLALPPEAQG. In terms of domain architecture, THD spans 62-204; sequence PAAHLVGDPS…SSVFFGAFAL (143 aa). The N-linked (GlcNAc...) asparagine glycan is linked to asparagine 95. Cysteine 119 and cysteine 155 are disulfide-bonded.

Belongs to the tumor necrosis factor family. Homotrimer, and heterotrimer of either two LTB and one LTA subunits or (less prevalent) two LTA and one LTB subunits. Interacts with TNFRSF14.

Its subcellular location is the secreted. The protein resides in the membrane. Functionally, cytokine that in its homotrimeric form binds to TNFRSF1A/TNFR1, TNFRSF1B/TNFBR and TNFRSF14/HVEM. In its heterotrimeric form with LTB binds to TNFRSF3/LTBR. Lymphotoxin is produced by lymphocytes and is cytotoxic for a wide range of tumor cells in vitro and in vivo. This Sus scrofa (Pig) protein is Lymphotoxin-alpha (LTA).